The primary structure comprises 259 residues: MTMELQRPREAAALTLSLLDLTNLREDCTPQQIATLCQRAHTEFGNTAAICIWPRFVAQARAAFGKDHTIRIATVVNFPSGDLDVATVVAETEAAIGDGADEIDLVIPYRKFMAGDESAVAEMIAAVRKACAAPVLLKVILETGELKDKALIRRASEIAIAEGADFIKTSTGKVAVNATLEAADIMLQAIRDSKKKVGFKPAGGIGTVEDATLYLRLAETIMAPNWAMPSTFRFGASGVLDDVLNVLAGGEPAKAASGY.

The active-site Proton donor/acceptor is D104. The active-site Schiff-base intermediate with acetaldehyde is the K168. Residue K200 is the Proton donor/acceptor of the active site.

The protein belongs to the DeoC/FbaB aldolase family. DeoC type 2 subfamily.

The protein localises to the cytoplasm. The catalysed reaction is 2-deoxy-D-ribose 5-phosphate = D-glyceraldehyde 3-phosphate + acetaldehyde. It functions in the pathway carbohydrate degradation; 2-deoxy-D-ribose 1-phosphate degradation; D-glyceraldehyde 3-phosphate and acetaldehyde from 2-deoxy-alpha-D-ribose 1-phosphate: step 2/2. Its function is as follows. Catalyzes a reversible aldol reaction between acetaldehyde and D-glyceraldehyde 3-phosphate to generate 2-deoxy-D-ribose 5-phosphate. This chain is Deoxyribose-phosphate aldolase, found in Agrobacterium fabrum (strain C58 / ATCC 33970) (Agrobacterium tumefaciens (strain C58)).